Reading from the N-terminus, the 212-residue chain is MSDLSDIRREYTKGGLRRKDLPDNPMALFETWMTQAKEANLSDPTAMCVATVDENGQPFQRIVLLKRFDDTGFVFFTNLESRKAKQIAINKQISLLFPWHPLERQVAVLGEAEPLSMMEVAKYFISRPKDSQIAAWVSKQSSKITARQALEGKFNEMKAKFAQGEVPIPKFWGGFLVRPKSIEFWQGGEHRLHDRFIYTKAASEWQIDRLAP.

Residues 8–11 (RREY) and lysine 66 each bind substrate. Residues 61 to 66 (RIVLLK), 76 to 77 (FT), arginine 82, lysine 83, and glutamine 105 contribute to the FMN site. Tyrosine 123, arginine 127, and serine 131 together coordinate substrate. FMN contacts are provided by residues 140-141 (QS) and tryptophan 185. A substrate-binding site is contributed by 191 to 193 (RLH). Arginine 195 is an FMN binding site.

Belongs to the pyridoxamine 5'-phosphate oxidase family. As to quaternary structure, homodimer. FMN serves as cofactor.

It carries out the reaction pyridoxamine 5'-phosphate + O2 + H2O = pyridoxal 5'-phosphate + H2O2 + NH4(+). It catalyses the reaction pyridoxine 5'-phosphate + O2 = pyridoxal 5'-phosphate + H2O2. It functions in the pathway cofactor metabolism; pyridoxal 5'-phosphate salvage; pyridoxal 5'-phosphate from pyridoxamine 5'-phosphate: step 1/1. Its pathway is cofactor metabolism; pyridoxal 5'-phosphate salvage; pyridoxal 5'-phosphate from pyridoxine 5'-phosphate: step 1/1. Functionally, catalyzes the oxidation of either pyridoxine 5'-phosphate (PNP) or pyridoxamine 5'-phosphate (PMP) into pyridoxal 5'-phosphate (PLP). The sequence is that of Pyridoxine/pyridoxamine 5'-phosphate oxidase from Shewanella denitrificans (strain OS217 / ATCC BAA-1090 / DSM 15013).